Reading from the N-terminus, the 587-residue chain is Glucosylglycerate phosphorylase (587 aa).

The Nucleophile role is filled by D236.

This sequence belongs to the glycosyl hydrolase 13 family. Glucosylglycerate phosphorylase subfamily.

It catalyses the reaction (2R)-2-O-(alpha-D-glucopyranosyl)-glycerate + phosphate = (R)-glycerate + alpha-D-glucose 1-phosphate. Its function is as follows. Catalyzes the reversible phosphorolysis of glucosylglycerate into alpha-D-glucose 1-phosphate (Glc1P) and D-glycerate. May be a regulator of intracellular levels of glucosylglycerate, a compatible solute that primarily protects organisms facing salt stress and very specific nutritional constraints. Cannot catalyze the phosphorolysis of sucrose. The polypeptide is Glucosylglycerate phosphorylase (Spirochaeta thermophila (strain ATCC 700085 / DSM 6578 / Z-1203)).